A 175-amino-acid polypeptide reads, in one-letter code: MRLPGRHVLYALSAVTMLAACSSNGARGGIASTNMNPTNPPATAETATVSPTPAPQSARTETWINLQVGDCLADLPPADLSRITVTIVDCATAHSAEVYLRAPVAVDAAVVSMANRDCAAGFAPYTGQSVDTSPYSVAYLIDSHQDRTGADLTPSTVICLLQPANGQLLTGSARR.

The signal sequence occupies residues 1–20 (MRLPGRHVLYALSAVTMLAA). C21 carries the N-palmitoyl cysteine lipid modification. Residue C21 is the site of S-diacylglycerol cysteine attachment. The tract at residues 31–56 (ASTNMNPTNPPATAETATVSPTPAPQ) is disordered. Residues 33-48 (TNMNPTNPPATAETAT) show a composition bias toward low complexity.

It is found in the cell membrane. The chain is Putative lipoprotein LppN (lppN) from Mycobacterium bovis (strain ATCC BAA-935 / AF2122/97).